We begin with the raw amino-acid sequence, 508 residues long: Photosystem II CP47 reaction center protein (508 aa).

The next 6 helical transmembrane spans lie at 21-36, 101-115, 140-156, 203-218, 237-252, and 457-472; these read AVHL…WAGS, IILS…IWHW, GIHL…FGAF, IAAG…FHLS, VLSS…AFVV, and IFAL…HGAR.

The protein belongs to the PsbB/PsbC family. PsbB subfamily. As to quaternary structure, PSII is composed of 1 copy each of membrane proteins PsbA, PsbB, PsbC, PsbD, PsbE, PsbF, PsbH, PsbI, PsbJ, PsbK, PsbL, PsbM, PsbT, PsbY, PsbZ, Psb30/Ycf12, at least 3 peripheral proteins of the oxygen-evolving complex and a large number of cofactors. It forms dimeric complexes. It depends on Binds multiple chlorophylls. PSII binds additional chlorophylls, carotenoids and specific lipids. as a cofactor.

Its subcellular location is the plastid. The protein resides in the chloroplast thylakoid membrane. One of the components of the core complex of photosystem II (PSII). It binds chlorophyll and helps catalyze the primary light-induced photochemical processes of PSII. PSII is a light-driven water:plastoquinone oxidoreductase, using light energy to abstract electrons from H(2)O, generating O(2) and a proton gradient subsequently used for ATP formation. The protein is Photosystem II CP47 reaction center protein of Bigelowiella natans (Pedinomonas minutissima).